An 86-amino-acid polypeptide reads, in one-letter code: Small ribosomal subunit protein bS20 (86 aa).

The tract at residues 1-27 is disordered; the sequence is MANNKSAKKRAIQAEKRRQHNASRRSM.

This sequence belongs to the bacterial ribosomal protein bS20 family.

Its function is as follows. Binds directly to 16S ribosomal RNA. This chain is Small ribosomal subunit protein bS20, found in Vibrio cholerae serotype O1 (strain ATCC 39541 / Classical Ogawa 395 / O395).